Here is a 446-residue protein sequence, read N- to C-terminus: ATP-dependent protease ATPase subunit HslU (446 aa).

ATP contacts are provided by residues V18, 60 to 65, D259, E324, and R396; that span reads GVGKTE.

The protein belongs to the ClpX chaperone family. HslU subfamily. As to quaternary structure, a double ring-shaped homohexamer of HslV is capped on each side by a ring-shaped HslU homohexamer. The assembly of the HslU/HslV complex is dependent on binding of ATP.

Its subcellular location is the cytoplasm. Its function is as follows. ATPase subunit of a proteasome-like degradation complex; this subunit has chaperone activity. The binding of ATP and its subsequent hydrolysis by HslU are essential for unfolding of protein substrates subsequently hydrolyzed by HslV. HslU recognizes the N-terminal part of its protein substrates and unfolds these before they are guided to HslV for hydrolysis. This chain is ATP-dependent protease ATPase subunit HslU, found in Dechloromonas aromatica (strain RCB).